Reading from the N-terminus, the 665-residue chain is Protein kinase domain-containing protein ppk2 (665 aa).

Disordered stretches follow at residues 42 to 63, 82 to 152, 187 to 217, and 286 to 343; these read PNDS…KKKF, GNST…LSRS, LNSQ…SSMN, and AESL…VGHP. The span at 82 to 104 shows a compositional bias: polar residues; it reads GNSTRSPPFHLQNQKSNGQSEVW. 2 stretches are compositionally biased toward low complexity: residues 137-152 and 206-217; these read SLSR…LSRS and TNRLSSSTSSMN. Residues 294–316 show a composition bias toward polar residues; the sequence is SATTIQQGDVSSYPLSRSVSTPV. Position 358 is a phosphoserine (Ser-358). The Protein kinase domain occupies 388-637; sequence YTDFTKICQQ…NMLLETSSFL (250 aa). ATP-binding positions include 394-402 and Lys-417; that span reads ICQQDTVGT.

It is found in the cytoplasm. In Schizosaccharomyces pombe (strain 972 / ATCC 24843) (Fission yeast), this protein is Protein kinase domain-containing protein ppk2 (ppk2).